The chain runs to 304 residues: Non-specific ribonucleoside hydrolase RihC (304 aa).

H233 is an active-site residue.

The protein belongs to the IUNH family. RihC subfamily.

Functionally, hydrolyzes both purine and pyrimidine ribonucleosides with a broad-substrate specificity. The polypeptide is Non-specific ribonucleoside hydrolase RihC (Escherichia coli O139:H28 (strain E24377A / ETEC)).